The primary structure comprises 687 residues: Glycine--tRNA ligase beta subunit (687 aa).

It belongs to the class-II aminoacyl-tRNA synthetase family. In terms of assembly, tetramer of two alpha and two beta subunits.

Its subcellular location is the cytoplasm. The catalysed reaction is tRNA(Gly) + glycine + ATP = glycyl-tRNA(Gly) + AMP + diphosphate. The polypeptide is Glycine--tRNA ligase beta subunit (Geotalea daltonii (strain DSM 22248 / JCM 15807 / FRC-32) (Geobacter daltonii)).